Consider the following 342-residue polypeptide: DNA repair protein RAD51 homolog 1 (342 aa).

The segment at 1-24 (MTTMEQRRNQNAVQQQDDEETQHG) is disordered. One can recognise a HhH domain in the interval 51–80 (TVEGVAYTPRKDLLQIKGISDAKVDKIVEA). Residues 100 to 314 (QEIIQITSGS…LRKGRAEERI (215 aa)) form the FtsK domain. Residue 130–137 (GEFRSGKT) coordinates ATP.

The protein belongs to the RecA family. RAD51 subfamily. As to quaternary structure, self-associates and interacts with XRCC3. Binds to RAD54/CHR25. Interacts with BRCA2A and BRCA2B. Can form a tripartite complex with both BRCA2B and DSS1(I). Detected in various tissues. Higher expression in reproductive tissues than in vegetative tissues, with the highest expression level in young flower buds. At cellular level, is expressed at low levels in flower primordia, then at higher levels in young anthers and at highest levels in both females and males meiocytes. Not detected in gametophytes.

The protein localises to the nucleus. Its function is as follows. Binds to single and double-stranded DNA and exhibits DNA-dependent ATPase activity. Unwinds duplex DNA. Component of the meiotic recombination pathway. Seems to play a role in mediating chromosome homology search, chromosome pairing and synapsis at early stages and probably chromosome crossing-over at later stages in meiosis. Probably is involved in the repair of meiotic double strand breaks (DBSs) generated by AtSPO11-1 and in homologous recombination. Its function is dispensable for vegetative growth and root mitosis. The protein is DNA repair protein RAD51 homolog 1 of Arabidopsis thaliana (Mouse-ear cress).